A 357-amino-acid chain; its full sequence is DnaJ homolog subfamily C member 25 (357 aa).

A helical membrane pass occupies residues 19 to 39 (WLLLAPLLLVPLLVRPAEALV). Positions 48–121 (DCYEVLGVSR…ETRKDYDYML (74 aa)) constitute a J domain. 2 helical membrane passes run 147–167 (VVILVSVCAISVFQYFSWWNS) and 241–261 (LLLFQVLLAPVHLCSYIAWYC).

Belongs to the DNAJC25 family.

The protein resides in the membrane. The protein is DnaJ homolog subfamily C member 25 (Dnajc25) of Rattus norvegicus (Rat).